We begin with the raw amino-acid sequence, 193 residues long: Thymidine kinase (193 aa).

Residues 9–16 (SAMNAGKS) and 87–90 (DEAQ) contribute to the ATP site. Glutamate 88 (proton acceptor) is an active-site residue. 4 residues coordinate Zn(2+): cysteine 145, cysteine 147, cysteine 182, and histidine 185.

This sequence belongs to the thymidine kinase family. As to quaternary structure, homotetramer.

Its subcellular location is the cytoplasm. It catalyses the reaction thymidine + ATP = dTMP + ADP + H(+). This is Thymidine kinase from Idiomarina loihiensis (strain ATCC BAA-735 / DSM 15497 / L2-TR).